Consider the following 440-residue polypeptide: Chromosome partition protein MukF (440 aa).

Residues 208–236 (LSETSGTLRELQDTLEAAGDKLQANLLRI) form a leucine-zipper region.

Belongs to the MukF family. As to quaternary structure, interacts, and probably forms a ternary complex, with MukE and MukB via its C-terminal region. The complex formation is stimulated by calcium or magnesium. It is required for an interaction between MukE and MukB.

It is found in the cytoplasm. The protein localises to the nucleoid. Its function is as follows. Involved in chromosome condensation, segregation and cell cycle progression. May participate in facilitating chromosome segregation by condensation DNA from both sides of a centrally located replisome during cell division. Not required for mini-F plasmid partitioning. Probably acts via its interaction with MukB and MukE. Overexpression results in anucleate cells. It has a calcium binding activity. The protein is Chromosome partition protein MukF of Escherichia coli O9:H4 (strain HS).